Consider the following 313-residue polypeptide: MDNKKRLAYAIIQFLHDQLRHGGLSSDAQESLEVAIQCLETAFGVTVEDSDLALPQTLPEIFEAAATGKEMPQDLRSPARTPPSEEDSAEAERLKTEGNEQMKVENFEAAVHFYGKAIELNPANAVYFCNRAAAYSKLGNYAGAVQDCERAICIDPAYSKAYGRMGLALSSLNKHVEAVAYYKKALELDPDNETYKSNLKIAELKLREAPSPTGGVGSFDIAGLLNNPGFMSMASNLMNNPQIQQLMSGMISGGNNPLGTPGTSPSQNDLASLIQAGQQFAQQMQQQNPELIEQLRSQIRSRTPSASNDDQQE.

The segment at 66 to 100 (ATGKEMPQDLRSPARTPPSEEDSAEAERLKTEGNE) is disordered. S77 is modified (phosphoserine). Position 81 is a phosphothreonine (T81). Position 84 is a phosphoserine (S84). Basic and acidic residues predominate over residues 90 to 100 (EAERLKTEGNE). TPR repeat units follow at residues 91–124 (AERLKTEGNEQMKVENFEAAVHFYGKAIELNPAN), 125–158 (AVYFCNRAAAYSKLGNYAGAVQDCERAICIDPAY), and 159–192 (SKAYGRMGLALSSLNKHVEAVAYYKKALELDPDN). N6-acetyllysine is present on K137. The interval 250 to 269 (MISGGNNPLGTPGTSPSQND) is disordered. S301 is subject to Phosphoserine. Phosphothreonine is present on T303. Position 305 is a phosphoserine (S305).

Belongs to the SGT family. In terms of assembly, homodimer. Homooligomer. Interacts with DNAJC5 and DNAJC5B. Interacts (via TPR repeats) with HSP90AA1. Interacts (via Gln-rich region) with SLC2A1. Interacts with HSP90AB1. Interacts (via TPR repeats) with HSPA8/Hsc70; the interaction is direct. Interacts with BAG6 (via ubiquitin-like domain); interaction prevents interaction between BAG6 and RNF126. Forms a multiprotein complex, at least composed of DNAJB12, DNAJB14, HSPA8/Hsc70 and SGTA; interaction with DNAJB14 and HSPA8/Hsc70 is direct. (Microbial infection) Interacts with Vpu and Gag from HIV-1. As to quaternary structure, (Microbial infection) Interacts with SARS-CoV accessory protein 7a. Ubiquitous.

Its subcellular location is the cytoplasm. It localises to the nucleus. Functionally, co-chaperone that binds misfolded and hydrophobic patches-containing client proteins in the cytosol. Mediates their targeting to the endoplasmic reticulum but also regulates their sorting to the proteasome when targeting fails. Functions in tail-anchored/type II transmembrane proteins membrane insertion constituting with ASNA1 and the BAG6 complex a targeting module. Functions upstream of the BAG6 complex and ASNA1, binding more rapidly the transmembrane domain of newly synthesized proteins. It is also involved in the regulation of the endoplasmic reticulum-associated misfolded protein catabolic process via its interaction with BAG6: collaborates with the BAG6 complex to maintain hydrophobic substrates in non-ubiquitinated states. Competes with RNF126 for interaction with BAG6, preventing the ubiquitination of client proteins associated with the BAG6 complex. Binds directly to HSC70 and HSP70 and regulates their ATPase activity. In terms of biological role, (Microbial infection) In case of infection by polyomavirus, involved in the virus endoplasmic reticulum membrane penetration and infection via interaction with DNAJB12, DNAJB14 and HSPA8/Hsc70. In Homo sapiens (Human), this protein is Small glutamine-rich tetratricopeptide repeat-containing protein alpha (SGTA).